The following is a 65-amino-acid chain: MANVQKIGKAVYKGPSVVKEIIYGITLGFAVGGLWKMHHWNNQRRTKEFYDLLEKGEISVVVEDE.

The chain crosses the membrane as a helical span at residues 20-37; it reads EIIYGITLGFAVGGLWKM.

Belongs to the cytochrome c oxidase subunit 5C family.

The protein localises to the mitochondrion inner membrane. In terms of biological role, this protein is one of the nuclear-coded polypeptide chains of cytochrome c oxidase, the terminal oxidase in mitochondrial electron transport. The sequence is that of Putative cytochrome c oxidase subunit 5C-4 from Arabidopsis thaliana (Mouse-ear cress).